Reading from the N-terminus, the 262-residue chain is Hydroxyethylthiazole kinase (262 aa).

A substrate-binding site is contributed by Met-50. ATP-binding residues include Arg-125 and Thr-171. Gly-198 is a substrate binding site.

The protein belongs to the Thz kinase family. Mg(2+) is required as a cofactor.

It carries out the reaction 5-(2-hydroxyethyl)-4-methylthiazole + ATP = 4-methyl-5-(2-phosphooxyethyl)-thiazole + ADP + H(+). It participates in cofactor biosynthesis; thiamine diphosphate biosynthesis; 4-methyl-5-(2-phosphoethyl)-thiazole from 5-(2-hydroxyethyl)-4-methylthiazole: step 1/1. Functionally, catalyzes the phosphorylation of the hydroxyl group of 4-methyl-5-beta-hydroxyethylthiazole (THZ). This Shigella sonnei (strain Ss046) protein is Hydroxyethylthiazole kinase.